Reading from the N-terminus, the 855-residue chain is Receptor-like protein kinase THESEUS 1 (855 aa).

The first 22 residues, 1-22, serve as a signal peptide directing secretion; it reads MVFTKSLLVLLWFLSCYTTTTS. Residues 23–415 are Extracellular-facing; sequence SALFNPPDNY…GGSGSKSKKK (393 aa). N-linked (GlcNAc...) asparagine glycans are attached at residues Asn41, Asn64, Asn75, Asn114, Asn118, Asn136, Asn143, Asn154, Asn168, Asn225, Asn242, Asn288, Asn353, and Asn376. A helical membrane pass occupies residues 416 to 436; the sequence is AVIIGSLVGAVTLILLIAVCC. The Cytoplasmic segment spans residues 437–855; sequence YCCLVASRKQ…FSQLVHPRGR (419 aa). The Protein kinase domain maps to 510–783; sequence FDESSLLGVG…GDVLWNLEYA (274 aa). ATP contacts are provided by residues 516-524 and Lys538; that span reads LGVGGFGRV. Catalysis depends on Asp634, which acts as the Proton acceptor. Positions 822–855 are disordered; that stretch reads IDRGGVNSGTGTDDDAEDATTSAVFSQLVHPRGR.

It belongs to the protein kinase superfamily. Ser/Thr protein kinase family. In terms of processing, autophosphorylated. In terms of tissue distribution, expressed in most vegetative tissues, including leaves, stems and roots, primarily in expanding cells and vascular tissue.

Its subcellular location is the cell membrane. In terms of biological role, receptor-like protein kinase required for cell elongation during vegetative growth, mostly in a brassinosteroid-(BR-) independent manner. Mediates the response of growing plant cells to the perturbation of cellulose synthesis and may act as a cell-wall-integrity sensor. Controls ectopic-lignin accumulation in cellulose-deficient mutant backgrounds. This is Receptor-like protein kinase THESEUS 1 (THE1) from Arabidopsis thaliana (Mouse-ear cress).